Reading from the N-terminus, the 139-residue chain is Nucleoside diphosphate kinase (139 aa).

ATP contacts are provided by Lys-12, Phe-60, Arg-88, Thr-94, Arg-105, and Asn-115. Catalysis depends on His-118, which acts as the Pros-phosphohistidine intermediate.

It belongs to the NDK family. As to quaternary structure, homotetramer. It depends on Mg(2+) as a cofactor.

The protein resides in the cytoplasm. The enzyme catalyses a 2'-deoxyribonucleoside 5'-diphosphate + ATP = a 2'-deoxyribonucleoside 5'-triphosphate + ADP. It carries out the reaction a ribonucleoside 5'-diphosphate + ATP = a ribonucleoside 5'-triphosphate + ADP. Its function is as follows. Major role in the synthesis of nucleoside triphosphates other than ATP. The ATP gamma phosphate is transferred to the NDP beta phosphate via a ping-pong mechanism, using a phosphorylated active-site intermediate. This is Nucleoside diphosphate kinase from Caldanaerobacter subterraneus subsp. tengcongensis (strain DSM 15242 / JCM 11007 / NBRC 100824 / MB4) (Thermoanaerobacter tengcongensis).